The sequence spans 635 residues: Probable retaining alpha-galactosidase (635 aa).

A signal peptide spans 1–30; it reads MARSVRRTTLALLLSAVLAMTLFVTAPAHA. Residue aspartate 179 participates in Ca(2+) binding. The Nucleophile role is filled by aspartate 397. 2 residues coordinate Ca(2+): glutamate 446 and glutamate 452. Residue glutamate 452 is the Proton donor/acceptor of the active site.

Belongs to the glycosyl hydrolase 97 family. The cofactor is Ca(2+).

It catalyses the reaction Hydrolysis of terminal, non-reducing alpha-D-galactose residues in alpha-D-galactosides, including galactose oligosaccharides, galactomannans and galactolipids.. This is Probable retaining alpha-galactosidase from Streptomyces bingchenggensis (strain BCW-1).